Reading from the N-terminus, the 687-residue chain is Homeobox-leucine zipper protein HDG12 (687 aa).

The tract at residues 1 to 32 is disordered; it reads MEFLGDSQNHDSSETEKKNKKKKRFHRHTPHQ. Residues 8–17 are compositionally biased toward basic and acidic residues; sequence QNHDSSETEK. Residues 18-30 show a composition bias toward basic residues; that stretch reads KNKKKKRFHRHTP. The homeobox DNA-binding region spans 21–80; that stretch reads KKKRFHRHTPHQIQRLESTFNECQHPDEKQRNQLSRELGLAPRQIKFWFQNRRTQKKAQH. The stretch at 87 to 150 forms a coiled coil; sequence ALKEENDKIR…LERVSSIAAK (64 aa). The region spanning 206–440 is the START domain; that stretch reads SEMDKSLMTN…LQRMCERFTN (235 aa).

It belongs to the HD-ZIP homeobox family. Class IV subfamily. As to quaternary structure, interacts with BBM. In terms of tissue distribution, expressed in apical meristems and young epidermal tissue including trichomes and stipules. Expressed in lateral root tips, the L1 layer of apical inflorescence meristems and early flower primordia, carpel and stamen filament epidermis, stigma papillae, ovule primordia, nucellus and embryo.

It is found in the nucleus. Functionally, probable transcription factor that acts as a negative regulator of trichome branching in association with HDG11. Seems to promote cell differentiation. May regulate cell differentiation and proliferation during root and shoot meristem development. Acts as a positive regulator of SCL18/LAS expression. Involved, together with PDF2, in the regulation of flower organs development by promoting the expression of APETALA 3 (AP3) in the epidermis and internal cell layers of developing flowers. This is Homeobox-leucine zipper protein HDG12 from Arabidopsis thaliana (Mouse-ear cress).